A 517-amino-acid polypeptide reads, in one-letter code: Serine O-succinyltransferase (517 aa).

The transit peptide at 1–46 (MSPLNGVARSFPRPFQAVTRRPFRVVQPAIACPSNSRSFNHSRSLR) directs the protein to the mitochondrion. The segment covering 36–64 (SRSFNHSRSLRSTGSQSPAPSPRDSSNPA) has biased composition (polar residues). Residues 36–66 (SRSFNHSRSLRSTGSQSPAPSPRDSSNPALS) are disordered. Positions 134–386 (NVILLHTGLS…LTQQLATKKQ (253 aa)) constitute an AB hydrolase-1 domain. Residues 141–144 (GLSA) form an important for substrate specificity region. The active-site Nucleophile is the Ser-238. Position 307 (Arg-307) interacts with substrate. Positions 413–436 (QPYQEQPSASTSAEQSASASETGS) are disordered. Low complexity predominate over residues 416 to 436 (QEQPSASTSAEQSASASETGS). Catalysis depends on residues Asp-461 and His-498. Asp-499 contacts substrate.

Belongs to the AB hydrolase superfamily. MetX family.

The protein resides in the mitochondrion. It catalyses the reaction succinyl-CoA + L-serine = O-succinyl-L-serine + CoA. It participates in amino-acid biosynthesis; L-cysteine biosynthesis; L-cysteine from L-serine: step 1/2. Functionally, transfers a succinyl group from succinyl-CoA to L-serine, forming succinyl-L-serine. Also has weak serine acetyl transferase activity and homoserine succinyl transferase activity. This is Serine O-succinyltransferase from Emericella nidulans (strain FGSC A4 / ATCC 38163 / CBS 112.46 / NRRL 194 / M139) (Aspergillus nidulans).